We begin with the raw amino-acid sequence, 210 residues long: MSYAVKEIFLTLQGEGAHAGRASVFCRFAGCNLWSGREADRQDATCKFCDTDFVGTDGTLGGRYASAVELADTIAAQWTASNDNRYVVLTGGEPLLQVDDALIDALHARGFEIGVETNGTIAAPDGLDWICVSPKGGSELVLRRGHELKLVYPQALAAPETFEGLAFERFSLQPMDGPEVAENTARAIDYCLRHPQWRLSVQTHKSLGIR.

Substrate-binding positions include 12–14 (LQG) and arginine 27. A Radical SAM core domain is found at 18–210 (HAGRASVFCR…VQTHKSLGIR (193 aa)). 3 residues coordinate [4Fe-4S] cluster: cysteine 31, cysteine 46, and cysteine 49. Position 51 (threonine 51) interacts with Mg(2+). Threonine 90 provides a ligand contact to substrate. S-adenosyl-L-methionine is bound by residues glycine 92, 133–135 (SPK), and 173–176 (QPMD).

Belongs to the radical SAM superfamily. 7-carboxy-7-deazaguanine synthase family. In terms of assembly, homodimer. [4Fe-4S] cluster serves as cofactor. It depends on S-adenosyl-L-methionine as a cofactor. Requires Mg(2+) as cofactor.

It carries out the reaction 6-carboxy-5,6,7,8-tetrahydropterin + H(+) = 7-carboxy-7-deazaguanine + NH4(+). Its pathway is purine metabolism; 7-cyano-7-deazaguanine biosynthesis. In terms of biological role, catalyzes the complex heterocyclic radical-mediated conversion of 6-carboxy-5,6,7,8-tetrahydropterin (CPH4) to 7-carboxy-7-deazaguanine (CDG), a step common to the biosynthetic pathways of all 7-deazapurine-containing compounds. The chain is 7-carboxy-7-deazaguanine synthase from Bradyrhizobium diazoefficiens (strain JCM 10833 / BCRC 13528 / IAM 13628 / NBRC 14792 / USDA 110).